Here is a 453-residue protein sequence, read N- to C-terminus: 13-hydroxylupanine O-tigloyltransferase (453 aa).

Catalysis depends on proton acceptor residues His166 and Asp385.

The protein belongs to the plant acyltransferase family. In terms of assembly, monomer. As to expression, expressed in roots and hypocotyls. Detected in seeds, leaves and cotyledons, but not in young developing leaves.

It catalyses the reaction 13-hydroxylupanine + (2E)-2-methylbut-2-enoyl-CoA = 13-(2-methylcrotonoyloxy)lupanine + CoA. With respect to regulation, inhibited by N-ethylmaleimide, p-chloromercuribenzoic acid and diethylpyrocarbonate (DEPC). In terms of biological role, acyl-CoA-dependent acyltransferase involved in the synthesis of lupanine alkaloids. Can use both (-)-13alpha-hydroxymultiflorine and (+)-13alpha-hydroxylupanine as substrates. Lower activity with (-)-3beta, 13alpha-dihydroxylupanine, but no activity with (+)-epilupinine and (-)-lupinine as substrates. Tigloyl-CoA, benzoyl-CoA and, more slowly, acetyl-CoA, propionyl-CoA and 2-butenoyl-CoA can act as acyl donors. This is 13-hydroxylupanine O-tigloyltransferase (HMT/HLT) from Lupinus albus (White lupine).